Consider the following 441-residue polypeptide: Methylenetetrahydrofolate--tRNA-(uracil-5-)-methyltransferase TrmFO (441 aa).

11–16 (GAGLAG) contacts FAD.

It belongs to the MnmG family. TrmFO subfamily. Requires FAD as cofactor.

The protein resides in the cytoplasm. It carries out the reaction uridine(54) in tRNA + (6R)-5,10-methylene-5,6,7,8-tetrahydrofolate + NADH + H(+) = 5-methyluridine(54) in tRNA + (6S)-5,6,7,8-tetrahydrofolate + NAD(+). The catalysed reaction is uridine(54) in tRNA + (6R)-5,10-methylene-5,6,7,8-tetrahydrofolate + NADPH + H(+) = 5-methyluridine(54) in tRNA + (6S)-5,6,7,8-tetrahydrofolate + NADP(+). In terms of biological role, catalyzes the folate-dependent formation of 5-methyl-uridine at position 54 (M-5-U54) in all tRNAs. This is Methylenetetrahydrofolate--tRNA-(uracil-5-)-methyltransferase TrmFO from Lactiplantibacillus plantarum (strain ATCC BAA-793 / NCIMB 8826 / WCFS1) (Lactobacillus plantarum).